Consider the following 401-residue polypeptide: Enoyl-[acyl-carrier-protein] reductase [NADH] (401 aa).

Residues 48–53, 74–75, 111–112, and 139–140 contribute to the NAD(+) site; these read GSSSGY, FE, DA, and LA. Tyr225 is a binding site for substrate. Residue Tyr235 is the Proton donor of the active site. Residues Lys244 and 273–275 each bind NAD(+); that span reads VVT.

It belongs to the TER reductase family. As to quaternary structure, monomer.

It carries out the reaction a 2,3-saturated acyl-[ACP] + NAD(+) = a (2E)-enoyl-[ACP] + NADH + H(+). Its pathway is lipid metabolism; fatty acid biosynthesis. In terms of biological role, involved in the final reduction of the elongation cycle of fatty acid synthesis (FAS II). Catalyzes the reduction of a carbon-carbon double bond in an enoyl moiety that is covalently linked to an acyl carrier protein (ACP). The chain is Enoyl-[acyl-carrier-protein] reductase [NADH] from Shewanella putrefaciens (strain CN-32 / ATCC BAA-453).